Reading from the N-terminus, the 204-residue chain is Protein C (204 aa).

Residues 1–78 (MPSFLRGILK…TEQSQRRPKI (78 aa)) are disordered. A compositionally biased stretch (basic and acidic residues) spans 10–20 (KPKERHHENKN). Residues 25–34 (SSDSLTSSYP) show a composition bias toward low complexity.

It belongs to the respirovirus protein C family.

The protein is Protein C (P/V/C) of Homo sapiens (Human).